The primary structure comprises 56 residues: FAAVSVDCSEYPKPACTLEYRPLCGSDSKTYANKCNFCNAVVESNGTLTLSHFGKC.

A Kazal-like domain is found at 6-56 (VDCSEYPKPACTLEYRPLCGSDSKTYANKCNFCNAVVESNGTLTLSHFGKC). 3 cysteine pairs are disulfide-bonded: cysteine 8-cysteine 38, cysteine 16-cysteine 35, and cysteine 24-cysteine 56. N-linked (GlcNAc...) asparagine glycosylation occurs at asparagine 45.

Its subcellular location is the secreted. In Oreortyx pictus (Mountain quail), this protein is Ovomucoid.